The chain runs to 543 residues: Small conductance calcium-activated potassium channel protein 1 (543 aa).

The segment at 1 to 92 (MNSHSYNGSV…SGKPSNVGHR (92 aa)) is disordered. Positions 65-76 (DQDDDEDDEEDE) are enriched in acidic residues. The chain crosses the membrane as a helical span at residues 111-131 (LIFGMFGIVVMVTETELSWGV). The helical transmembrane segment at 140 to 160 (FALKCLISLSTAILLGLVVLY) threads the bilayer. Residues 179–199 (IAMTCERVFLISLELAVCAIH) traverse the membrane as a helical segment. The chain crosses the membrane as a helical span at residues 228 to 248 (VLLSIPMFLRLYLLGRVMLLH). The chain crosses the membrane as a helical span at residues 277 to 297 (LMTICPGTVLLVFSISSWIIA). The segment at residues 317–337 (FLGAMWLISITFLSIGYGDMV) is an intramembrane region (pore-forming). The helical transmembrane segment at 346–366 (VCLLTGIMGAGCTALVVAVVA) threads the bilayer. The calmodulin-binding stretch occupies residues 384–463 (DTQLTKRVKN…LTDLAKTQTV (80 aa)). A disordered region spans residues 505 to 543 (QAIRPPPPPLPPRPGPGPQDQAARSSPCRWTPVAPSDCG). The span at 508–521 (RPPPPPLPPRPGPG) shows a compositional bias: pro residues.

It belongs to the potassium channel KCNN family. KCa2.1/KCNN1 subfamily. As to quaternary structure, homodimer. Heteromultimer with KCNN2 and KCNN3. The complex is composed of 4 channel subunits each of which binds to a calmodulin subunit which regulates the channel activity through calcium-binding. Interacts with calmodulin.

It localises to the membrane. The protein localises to the cytoplasm. Its subcellular location is the myofibril. It is found in the sarcomere. The protein resides in the z line. The catalysed reaction is K(+)(in) = K(+)(out). Its activity is regulated as follows. Inhibited by bee venom neurotoxin apamin. Inhibited by d-tubocurarine and tetraethylammonium (TEA). Its function is as follows. Small conductance calcium-activated potassium channel that mediates the voltage-independent transmembrane transfer of potassium across the cell membrane through a constitutive interaction with calmodulin which binds the intracellular calcium allowing its opening. The current is characterized by a voltage-independent activation, an intracellular calcium concentration increase-dependent activation and a single-channel conductance of about 3 picosiemens. Also presents an inwardly rectifying current, thus reducing its already small outward conductance of potassium ions, which is particularly the case when the membrane potential displays positive values, above + 20 mV. Activation is followed by membrane hyperpolarization. Thought to regulate neuronal excitability by contributing to the slow component of synaptic afterhyperpolarization. The polypeptide is Small conductance calcium-activated potassium channel protein 1 (Homo sapiens (Human)).